The chain runs to 131 residues: Protein Turandot M (131 aa).

An N-terminal signal peptide occupies residues 1–23 (MNPTIYLSCLMVFSVFLLGKVNA).

Belongs to the Turandot family.

It localises to the secreted. A humoral factor that may play a role in stress tolerance. Requires Mekk1 expression in the fat body to regulate response to septic injury and consequent immune response. The protein is Protein Turandot M of Drosophila melanogaster (Fruit fly).